Consider the following 261-residue polypeptide: Succinate dehydrogenase [ubiquinone] iron-sulfur subunit, mitochondrial (261 aa).

The 2Fe-2S ferredoxin-type domain occupies 31 to 122 (FKIYRWNPDT…DVKIYPLPHM (92 aa)). [2Fe-2S] cluster-binding residues include cysteine 82, cysteine 87, cysteine 90, and cysteine 102. A 4Fe-4S ferredoxin-type domain is found at 164–194 (DRKKLDGLYECILCACCSTACPSYWWNNEQY). Positions 174, 177, and 180 each coordinate [4Fe-4S] cluster. [3Fe-4S] cluster is bound at residue cysteine 184. Residue tryptophan 189 participates in a ubiquinone binding. Cysteine 231 and cysteine 237 together coordinate [3Fe-4S] cluster. Cysteine 241 provides a ligand contact to [4Fe-4S] cluster.

Belongs to the succinate dehydrogenase/fumarate reductase iron-sulfur protein family. As to quaternary structure, component of complex II composed of four subunits: a flavoprotein (FP), an iron-sulfur protein (IP), and a cytochrome b composed of a large and a small subunit. It depends on [2Fe-2S] cluster as a cofactor. [3Fe-4S] cluster is required as a cofactor. [4Fe-4S] cluster serves as cofactor.

It is found in the mitochondrion inner membrane. It catalyses the reaction a quinone + succinate = fumarate + a quinol. It participates in carbohydrate metabolism; tricarboxylic acid cycle; fumarate from succinate (eukaryal route): step 1/1. Functionally, iron-sulfur protein (IP) subunit of succinate dehydrogenase (SDH) that is involved in complex II of the mitochondrial electron transport chain and is responsible for transferring electrons from succinate to ubiquinone (coenzyme Q). In Eremothecium gossypii (strain ATCC 10895 / CBS 109.51 / FGSC 9923 / NRRL Y-1056) (Yeast), this protein is Succinate dehydrogenase [ubiquinone] iron-sulfur subunit, mitochondrial (SDH2).